We begin with the raw amino-acid sequence, 295 residues long: Outer surface protein B (295 aa).

Residues 1–16 form the signal peptide; that stretch reads MKQYLLGFTLVFALIA. Residue C17 is the site of N-palmitoyl cysteine attachment. C17 carries S-diacylglycerol cysteine lipidation.

It localises to the cell outer membrane. This Borreliella burgdorferi (Lyme disease spirochete) protein is Outer surface protein B (ospB).